The primary structure comprises 218 residues: Ropporin-1-like protein (218 aa).

One can recognise an RIIa domain in the interval 17 to 54 (PALPNMLKQFTKAAIRTQPRDVLQWAADYFSALSKGQD). Residues 199-218 (QSQGGMVQPSNFTSLHTAEK) are disordered.

It belongs to the ropporin family. Component of axonemal radial spoke complexes.

The protein localises to the cell projection. The protein resides in the cilium. It localises to the flagellum. In terms of biological role, functions as part of axonemal radial spoke complexes that play an important part in the motility of sperm and cilia. Important for male fertility. Involved in fibrous sheath integrity and sperm motility, plays a role in PKA-dependent signaling processes required for spermatozoa capacitation. In Danio rerio (Zebrafish), this protein is Ropporin-1-like protein (ropn1l).